A 201-amino-acid polypeptide reads, in one-letter code: Large ribosomal subunit protein uL4 (201 aa).

The segment at 46-71 (QKTRAEVVGSGKKPWRQKGTGRARAG) is disordered.

It belongs to the universal ribosomal protein uL4 family. Part of the 50S ribosomal subunit.

One of the primary rRNA binding proteins, this protein initially binds near the 5'-end of the 23S rRNA. It is important during the early stages of 50S assembly. It makes multiple contacts with different domains of the 23S rRNA in the assembled 50S subunit and ribosome. In terms of biological role, forms part of the polypeptide exit tunnel. This Shewanella woodyi (strain ATCC 51908 / MS32) protein is Large ribosomal subunit protein uL4.